A 777-amino-acid polypeptide reads, in one-letter code: Glucocorticoid receptor (777 aa).

A compositionally biased stretch (basic and acidic residues) spans 1 to 14 (MDSKESLTPGREEN). Residues 1–23 (MDSKESLTPGREENPSSVLAQER) form a disordered region. The modulating stretch occupies residues 1-420 (MDSKESLTPG…TATTGPPPKL (420 aa)). Residue threonine 8 is modified to Phosphothreonine. The residue at position 23 (arginine 23) is an Omega-N-methylarginine. 4 positions are modified to phosphoserine: serine 45, serine 113, serine 134, and serine 141. Polar residues predominate over residues 130–140 (NRSTSVPENPK). A disordered region spans residues 130–183 (NRSTSVPENPKSSASTAVSAAPTEKEFPKTHSDISSEQQHLKGQTGTNGGNVKL). Over residues 141 to 150 (SSASTAVSAA) the composition is skewed to low complexity. The span at 152-163 (TEKEFPKTHSDI) shows a compositional bias: basic and acidic residues. Over residues 164–174 (SSEQQHLKGQT) the composition is skewed to polar residues. A phosphoserine mark is found at serine 203, serine 211, and serine 226. Lysine 258 is covalently cross-linked (Glycyl lysine isopeptide (Lys-Gly) (interchain with G-Cter in SUMO2)). Serine 267 carries the phosphoserine modification. Residues lysine 277 and lysine 293 each participate in a glycyl lysine isopeptide (Lys-Gly) (interchain with G-Cter in SUMO); alternate cross-link. Glycyl lysine isopeptide (Lys-Gly) (interchain with G-Cter in SUMO2); alternate cross-links involve residues lysine 277 and lysine 293. Residues 394-414 (SSPSMRPDVSSPPSSSSTATT) are compositionally biased toward low complexity. The disordered stretch occupies residues 394–415 (SSPSMRPDVSSPPSSSSTATTG). A Phosphoserine modification is found at serine 404. A Glycyl lysine isopeptide (Lys-Gly) (interchain with G-Cter in ubiquitin) cross-link involves residue lysine 419. 2 consecutive NR C4-type zinc fingers follow at residues 421–441 (CLVCSDEASGCHYGVLTCGSC) and 457–476 (CAGRNDCIIDKIRRKNCPAC). The nuclear receptor DNA-binding region spans 421–486 (CLVCSDEASG…RYRKCLQAGM (66 aa)). 4 positions are modified to N6-acetyllysine: lysine 480, lysine 492, lysine 494, and lysine 495. The tract at residues 485-777 (GMNLEARKTK…NIKKLLFHQK (293 aa)) is interaction with CLOCK. Residues 487-523 (NLEARKTKKKIKGIQQATTGVSQETPENPANKTIVPA) form a hinge region. The region spanning 524–758 (TLPQLTPTLV…FPEMLAEIIT (235 aa)) is the NR LBD domain. The interval 532–697 (LVSLLEVIEP…EIRMTYIKEL (166 aa)) is interaction with CRY1. Lysine 703 participates in a covalent cross-link: Glycyl lysine isopeptide (Lys-Gly) (interchain with G-Cter in SUMO).

It belongs to the nuclear hormone receptor family. NR3 subfamily. As to quaternary structure, heteromultimeric cytoplasmic complex with HSP90AA1, HSPA1A/HSPA1B, and FKBP5 or another immunophilin such as PPID, STIP1, or the immunophilin homolog PPP5C. Upon ligand binding FKBP5 dissociates from the complex and FKBP4 takes its place, thereby linking the complex to dynein and mediating transport to the nucleus, where the complex dissociates. Probably forms a complex composed of chaperones HSP90 and HSP70, co-chaperones CDC37, PPP5C, TSC1 and client protein TSC2, CDK4, AKT, RAF1 and NR3C1; this complex does not contain co-chaperones STIP1/HOP and PTGES3/p23. Directly interacts with UNC45A. Binds to DNA as a homodimer, and as heterodimer with NR3C2 or the retinoid X receptor. Binds STAT5A and STAT5B homodimers and heterodimers. Interacts with NRIP1, POU2F1, POU2F2 and TRIM28. Interacts with several coactivator complexes, including the SMARCA4 complex, CREBBP/EP300, TADA2L (Ada complex) and p160 coactivators such as NCOA2 and NCOA6. Interaction with BAG1 inhibits transactivation. Interacts with HEXIM1 and TGFB1I1. Interacts with NCOA1. Interacts with NCOA3, SMARCA4, SMARCC1, SMARCD1, and SMARCE1. Interacts with CLOCK, CRY1 and CRY2 in a ligand-dependent fashion. Interacts with CIART. Interacts with RWDD3. Interacts with UBE2I/UBC9 and this interaction is enhanced in the presence of RWDD3. Interacts with GRIP1. Interacts with NR4A3 (via nuclear receptor DNA-binding domain), represses transcription activity of NR4A3 on the POMC promoter Nur response element (NurRE). Directly interacts with PNRC2 to attract and form a complex with UPF1 and DCP1A; the interaction leads to rapid mRNA degradation. Interacts with GSK3B. Interacts with FNIP1 and FNIP2. Interacts (via C-terminus) with HNRNPU (via C-terminus). Interacts with MCM3AP. Interacts (via domain NR LBD) with HSP90AA1 and HSP90AB1. In the absence of hormonal ligand, interacts with TACC1. Interacts (via NR LBD domain) with ZNF764 (via KRAB domain); the interaction regulates transcription factor activity of NR3C1 by directing its actions toward certain biologic pathways. Acetylation by CLOCK reduces its binding to glucocorticoid response elements and its transcriptional activity. Post-translationally, increased proteasome-mediated degradation in response to glucocorticoids. In terms of processing, phosphorylated in the absence of hormone; becomes hyperphosphorylated in the presence of glucocorticoid. The Ser-203, Ser-226 and Ser-404-phosphorylated forms are mainly cytoplasmic, and the Ser-211-phosphorylated form is nuclear. Phosphorylation at Ser-211 increases transcriptional activity. Phosphorylation at Ser-203, Ser-226 and Ser-404 decreases signaling capacity. Phosphorylation at Ser-404 may protect from glucocorticoid-induced apoptosis. Phosphorylation at Ser-203 and Ser-211 is not required in regulation of chromosome segregation. May be dephosphorylated by PPP5C, attenuates NR3C1 action. Ubiquitinated by UBR5, leading to its degradation: UBR5 specifically recognizes and binds ligand-bound NR3C1 when it is not associated with coactivators (NCOAs). In presence of NCOAs, the UBR5-degron is not accessible, preventing its ubiquitination and degradation. Post-translationally, sumoylation at Lys-277 and Lys-293 negatively regulates its transcriptional activity. Sumoylation at Lys-703 positively regulates its transcriptional activity in the presence of RWDD3. Sumoylation at Lys-277 and Lys-293 is dispensable whereas sumoylation at Lys-703 is critical for the stimulatory effect of RWDD3 on its transcriptional activity. Heat shock increases sumoylation in a RWDD3-dependent manner.

The protein localises to the cytoplasm. Its subcellular location is the nucleus. It localises to the mitochondrion. It is found in the cytoskeleton. The protein resides in the spindle. The protein localises to the microtubule organizing center. Its subcellular location is the centrosome. It localises to the chromosome. It is found in the nucleoplasm. Functionally, receptor for glucocorticoids (GC). Has a dual mode of action: as a transcription factor that binds to glucocorticoid response elements (GRE), both for nuclear and mitochondrial DNA, and as a modulator of other transcription factors. Affects inflammatory responses, cellular proliferation and differentiation in target tissues. Involved in chromatin remodeling. Plays a role in rapid mRNA degradation by binding to the 5' UTR of target mRNAs and interacting with PNRC2 in a ligand-dependent manner which recruits the RNA helicase UPF1 and the mRNA-decapping enzyme DCP1A, leading to RNA decay. Could act as a coactivator for STAT5-dependent transcription upon growth hormone (GH) stimulation and could reveal an essential role of hepatic GR in the control of body growth. Mediates glucocorticoid-induced apoptosis. Promotes accurate chromosome segregation during mitosis. May act as a tumor suppressor. May play a negative role in adipogenesis through the regulation of lipolytic and antilipogenic gene expression. This is Glucocorticoid receptor (NR3C1) from Pongo abelii (Sumatran orangutan).